The primary structure comprises 206 residues: MIGRLHGIIIEKSPPEILLDVGGVGYELQLPMTCFYELPAVGQEATIITHFVVREDAQLLYGFNTRQERTLFRELLKANGVGPKLALAIMSGMSANQFVSCVEREDVSSLVKLPGVGKKTAERLIVEMKDRLKGWISHDLFTPYTDAAPVDHEPSLAPADTVESEAVAALLALGYKPQQASLVVSKVIKPEMTVENVIREALRSML.

The domain I stretch occupies residues 1–64; that stretch reads MIGRLHGIII…EDAQLLYGFN (64 aa). A domain II region spans residues 65–143; sequence TRQERTLFRE…GWISHDLFTP (79 aa). Positions 144 to 157 are flexible linker; sequence YTDAAPVDHEPSLA. The segment at 158 to 206 is domain III; sequence PADTVESEAVAALLALGYKPQQASLVVSKVIKPEMTVENVIREALRSML.

The protein belongs to the RuvA family. As to quaternary structure, homotetramer. Forms an RuvA(8)-RuvB(12)-Holliday junction (HJ) complex. HJ DNA is sandwiched between 2 RuvA tetramers; dsDNA enters through RuvA and exits via RuvB. An RuvB hexamer assembles on each DNA strand where it exits the tetramer. Each RuvB hexamer is contacted by two RuvA subunits (via domain III) on 2 adjacent RuvB subunits; this complex drives branch migration. In the full resolvosome a probable DNA-RuvA(4)-RuvB(12)-RuvC(2) complex forms which resolves the HJ.

It is found in the cytoplasm. Functionally, the RuvA-RuvB-RuvC complex processes Holliday junction (HJ) DNA during genetic recombination and DNA repair, while the RuvA-RuvB complex plays an important role in the rescue of blocked DNA replication forks via replication fork reversal (RFR). RuvA specifically binds to HJ cruciform DNA, conferring on it an open structure. The RuvB hexamer acts as an ATP-dependent pump, pulling dsDNA into and through the RuvAB complex. HJ branch migration allows RuvC to scan DNA until it finds its consensus sequence, where it cleaves and resolves the cruciform DNA. The chain is Holliday junction branch migration complex subunit RuvA from Tolumonas auensis (strain DSM 9187 / NBRC 110442 / TA 4).